The primary structure comprises 471 residues: tRNA-2-methylthio-N(6)-dimethylallyladenosine synthase (471 aa).

The MTTase N-terminal domain occupies 31-149; that stretch reads LYYHIETYGC…FPQLLWEALN (119 aa). [4Fe-4S] cluster is bound by residues Cys-40, Cys-76, Cys-110, Cys-186, Cys-190, and Cys-193. Positions 172-402 constitute a Radical SAM core domain; it reads RDSNLKAWVN…IELQNKISLE (231 aa). Residues 405-468 enclose the TRAM domain; that stretch reads AELRGKIVEV…AWTMQGELVE (64 aa).

It belongs to the methylthiotransferase family. MiaB subfamily. In terms of assembly, monomer. [4Fe-4S] cluster is required as a cofactor.

It localises to the cytoplasm. The catalysed reaction is N(6)-dimethylallyladenosine(37) in tRNA + (sulfur carrier)-SH + AH2 + 2 S-adenosyl-L-methionine = 2-methylsulfanyl-N(6)-dimethylallyladenosine(37) in tRNA + (sulfur carrier)-H + 5'-deoxyadenosine + L-methionine + A + S-adenosyl-L-homocysteine + 2 H(+). In terms of biological role, catalyzes the methylthiolation of N6-(dimethylallyl)adenosine (i(6)A), leading to the formation of 2-methylthio-N6-(dimethylallyl)adenosine (ms(2)i(6)A) at position 37 in tRNAs that read codons beginning with uridine. The polypeptide is tRNA-2-methylthio-N(6)-dimethylallyladenosine synthase (Thermoanaerobacter pseudethanolicus (strain ATCC 33223 / 39E) (Clostridium thermohydrosulfuricum)).